Here is a 556-residue protein sequence, read N- to C-terminus: Membrane protein insertase YidC (556 aa).

The next 5 helical transmembrane spans lie at 6 to 26 (IVLYMALALIGLSLWNAWQID), 332 to 352 (LDLTVDYGILWFLSSLLFSLM), 358 to 378 (VVGNWGWSIVLVTVLIKLAFY), 428 to 448 (LGGCLPILIQIPVFIALYWVL), and 501 to 521 (VMMFLPILFTGLFWNFPSGLV).

It belongs to the OXA1/ALB3/YidC family. Type 1 subfamily. As to quaternary structure, interacts with the Sec translocase complex via SecD. Specifically interacts with transmembrane segments of nascent integral membrane proteins during membrane integration.

The protein resides in the cell inner membrane. Functionally, required for the insertion and/or proper folding and/or complex formation of integral membrane proteins into the membrane. Involved in integration of membrane proteins that insert both dependently and independently of the Sec translocase complex, as well as at least some lipoproteins. Aids folding of multispanning membrane proteins. The chain is Membrane protein insertase YidC from Legionella pneumophila (strain Lens).